Consider the following 833-residue polypeptide: Serine/threonine-protein phosphatase 4 regulatory subunit 3A (833 aa).

Positions 1 to 100 (MTDTRRRVKV…DEIWEKICQV (100 aa)) constitute a WH1 domain. 2 positions are modified to phosphoserine: Ser117 and Ser127. Lys655 is modified (N6-acetyllysine). Over residues 683 to 694 (FNTDEDDMEDGE) the composition is skewed to acidic residues. Disordered stretches follow at residues 683 to 712 (FNTD…IMDP) and 733 to 833 (KTNL…KFDS). 7 positions are modified to phosphoserine: Ser698, Ser741, Ser768, Ser771, Ser774, Ser777, and Ser780. The span at 734-751 (TNLSGRQSPSFKLSLSSG) shows a compositional bias: polar residues. The span at 752–768 (TKTNLTSQSSTTNLPGS) shows a compositional bias: low complexity. Residues 785 to 794 (PKNTSQTAAI) are compositionally biased toward polar residues. The span at 806–820 (YPDDDEDDDEDEDKE) shows a compositional bias: acidic residues.

Belongs to the SMEK family. As to quaternary structure, serine/threonine-protein phosphatase 4 (PP4) occurs in different assemblies of the catalytic and one or more regulatory subunits. Component of the PP4 complex PPP4C-PPP4R2-PPP4R3A. Interacts with PPP4C; the interaction requires PPP4R2.

The protein localises to the cytoplasm. The protein resides in the cytoskeleton. It is found in the microtubule organizing center. Its subcellular location is the centrosome. It localises to the nucleus. Its function is as follows. Regulatory subunit of serine/threonine-protein phosphatase 4. May regulate the activity of PPP4C at centrosomal microtubule organizing centers. The PPP4C-PPP4R2-PPP4R3A PP4 complex specifically dephosphorylates H2AX phosphorylated on 'Ser-140' (gamma-H2AX) generated during DNA replication and required for DNA DSB repair. In Homo sapiens (Human), this protein is Serine/threonine-protein phosphatase 4 regulatory subunit 3A.